We begin with the raw amino-acid sequence, 194 residues long: Adenylate kinase isoenzyme 1 (194 aa).

Position 1 is an N-acetylmethionine (methionine 1). 18–23 (GSGKGT) contributes to the ATP binding site. A Phosphoserine modification is found at serine 38. The interval 38-67 (STGDLLRAEVSSGSARGKKLSEIMEKGQLV) is NMP. Residues threonine 39, arginine 44, 65 to 67 (QLV), 94 to 97 (GYPR), and glutamine 101 contribute to the AMP site. An LID region spans residues 131–141 (KRGETSGRVDD). Arginine 132 is a binding site for ATP. AMP is bound by residues arginine 138 and arginine 149. Glycine 177 contributes to the ATP binding site.

Belongs to the adenylate kinase family. AK1 subfamily. In terms of assembly, monomer. Requires Mg(2+) as cofactor.

Its subcellular location is the cytoplasm. It catalyses the reaction a ribonucleoside 5'-phosphate + ATP = a ribonucleoside 5'-diphosphate + ADP. The catalysed reaction is AMP + ATP = 2 ADP. It carries out the reaction dAMP + ATP = dADP + ADP. The enzyme catalyses dATP + AMP = dADP + ADP. It catalyses the reaction dAMP + dATP = 2 dADP. The catalysed reaction is a 2'-deoxyribonucleoside 5'-diphosphate + ATP = a 2'-deoxyribonucleoside 5'-triphosphate + ADP. It carries out the reaction a ribonucleoside 5'-diphosphate + ATP = a ribonucleoside 5'-triphosphate + ADP. The enzyme catalyses CDP + GTP = CTP + GDP. It catalyses the reaction GDP + ATP = GTP + ADP. The catalysed reaction is UDP + ATP = UTP + ADP. It carries out the reaction GTP + UDP = UTP + GDP. The enzyme catalyses dTDP + GTP = dTTP + GDP. It catalyses the reaction dCDP + GTP = dCTP + GDP. The catalysed reaction is dGDP + ATP = dGTP + ADP. It carries out the reaction dADP + GTP = dATP + GDP. The enzyme catalyses thiamine diphosphate + ADP = thiamine triphosphate + AMP. Catalyzes the reversible transfer of the terminal phosphate group between ATP and AMP. Also displays broad nucleoside diphosphate kinase activity. Plays an important role in cellular energy homeostasis and in adenine nucleotide metabolism. Also catalyzes at a very low rate the synthesis of thiamine triphosphate (ThTP) from thiamine diphosphate (ThDP) and ADP. In Oryctolagus cuniculus (Rabbit), this protein is Adenylate kinase isoenzyme 1.